We begin with the raw amino-acid sequence, 207 residues long: Proteasome subunit beta 2 (207 aa).

Residues 1–10 constitute a propeptide, removed in mature form; by autocatalysis; the sequence is MLQLTEKFKG. The active-site Nucleophile is the Thr11.

Belongs to the peptidase T1B family. As to quaternary structure, the 20S proteasome core is composed of 14 alpha and 14 beta subunits that assemble into four stacked heptameric rings, resulting in a barrel-shaped structure. The two inner rings, each composed of seven catalytic beta subunits, are sandwiched by two outer rings, each composed of seven alpha subunits. The catalytic chamber with the active sites is on the inside of the barrel. Has a gated structure, the ends of the cylinder being occluded by the N-termini of the alpha-subunits. Is capped at one or both ends by the proteasome regulatory ATPase, PAN.

The protein resides in the cytoplasm. The enzyme catalyses Cleavage of peptide bonds with very broad specificity.. The formation of the proteasomal ATPase PAN-20S proteasome complex, via the docking of the C-termini of PAN into the intersubunit pockets in the alpha-rings, triggers opening of the gate for substrate entry. Interconversion between the open-gate and close-gate conformations leads to a dynamic regulation of the 20S proteasome proteolysis activity. Component of the proteasome core, a large protease complex with broad specificity involved in protein degradation. The chain is Proteasome subunit beta 2 from Pyrococcus abyssi (strain GE5 / Orsay).